Reading from the N-terminus, the 131-residue chain is Prefoldin subunit beta (131 aa).

Disordered stretches follow at residues 19-41 (LQET…RESE) and 112-131 (LQGG…AGGA). A compositionally biased stretch (low complexity) spans 20–35 (QETAQQVAQQKQQAET). Gly residues predominate over residues 114–131 (GGAGGGPMGPGGPGAGGA).

Belongs to the prefoldin subunit beta family. In terms of assembly, heterohexamer of two alpha and four beta subunits.

The protein resides in the cytoplasm. Molecular chaperone capable of stabilizing a range of proteins. Seems to fulfill an ATP-independent, HSP70-like function in archaeal de novo protein folding. The chain is Prefoldin subunit beta from Natronomonas pharaonis (strain ATCC 35678 / DSM 2160 / CIP 103997 / JCM 8858 / NBRC 14720 / NCIMB 2260 / Gabara) (Halobacterium pharaonis).